Here is a 147-residue protein sequence, read N- to C-terminus: Two-component response regulator ORR11 (147 aa).

The Response regulatory domain occupies 29 to 146 (HVLAVDDSSV…DVSRLFSRVL (118 aa)). At Asp79 the chain carries 4-aspartylphosphate.

This sequence belongs to the ARR family. Type-A subfamily. Two-component system major event consists of a His-to-Asp phosphorelay between a sensor histidine kinase (HK) and a response regulator (RR). In plants, the His-to-Asp phosphorelay involves an additional intermediate named Histidine-containing phosphotransfer protein (HPt). This multistep phosphorelay consists of a His-Asp-His-Asp sequential transfer of a phosphate group between first a His and an Asp of the HK protein, followed by the transfer to a conserved His of the HPt protein and finally the transfer to an Asp in the receiver domain of the RR protein.

Functionally, functions as a response regulator involved in His-to-Asp phosphorelay signal transduction system. Phosphorylation of the Asp residue in the receiver domain activates the ability of the protein to promote the transcription of target genes. Type-A response regulators seem to act as negative regulators of the cytokinin signaling. This Oryza sativa subsp. indica (Rice) protein is Two-component response regulator ORR11.